The primary structure comprises 235 residues: Elongation factor Tu (235 aa).

Residues 1 to 125 form the tr-type G domain; sequence KNMITGAAQM…EVDEYIPTPE (125 aa). 47–50 contacts GTP; the sequence is NKED.

Belongs to the TRAFAC class translation factor GTPase superfamily. Classic translation factor GTPase family. EF-Tu/EF-1A subfamily. In terms of assembly, monomer.

The protein localises to the cytoplasm. The enzyme catalyses GTP + H2O = GDP + phosphate + H(+). In terms of biological role, GTP hydrolase that promotes the GTP-dependent binding of aminoacyl-tRNA to the A-site of ribosomes during protein biosynthesis. The protein is Elongation factor Tu (tufA) of Gloeothece membranacea (strain PCC 6501 / SAG 26.84).